We begin with the raw amino-acid sequence, 601 residues long: UvrABC system protein C (601 aa).

The 79-residue stretch at Thr17–Ile95 folds into the GIY-YIG domain. The UVR domain maps to Ser204–Val239.

It belongs to the UvrC family. As to quaternary structure, interacts with UvrB in an incision complex.

It is found in the cytoplasm. The UvrABC repair system catalyzes the recognition and processing of DNA lesions. UvrC both incises the 5' and 3' sides of the lesion. The N-terminal half is responsible for the 3' incision and the C-terminal half is responsible for the 5' incision. The polypeptide is UvrABC system protein C (Chromobacterium violaceum (strain ATCC 12472 / DSM 30191 / JCM 1249 / CCUG 213 / NBRC 12614 / NCIMB 9131 / NCTC 9757 / MK)).